A 222-amino-acid chain; its full sequence is LHFPL tetraspan subfamily member 3 protein (222 aa).

Transmembrane regions (helical) follow at residues 22–42 (IGVL…VCFI), 96–116 (FFIG…TLFF), 126–146 (ICAW…MIFP), and 177–197 (ILAI…VVLG).

Belongs to the LHFP family. As to expression, brain-specific.

The protein resides in the membrane. The chain is LHFPL tetraspan subfamily member 3 protein from Mus musculus (Mouse).